A 354-amino-acid polypeptide reads, in one-letter code: Selenide, water dikinase (354 aa).

Cys-23 is a catalytic residue. Residues Lys-26 and 54–56 (TAD) contribute to the ATP site. Asp-57 lines the Mg(2+) pocket. Residues Asp-74, Asp-97, and 145-147 (GHS) contribute to the ATP site. Asp-97 provides a ligand contact to Mg(2+). Asp-233 serves as a coordination point for Mg(2+).

Belongs to the selenophosphate synthase 1 family. Class I subfamily. Homodimer. Requires Mg(2+) as cofactor.

It catalyses the reaction hydrogenselenide + ATP + H2O = selenophosphate + AMP + phosphate + 2 H(+). Functionally, synthesizes selenophosphate from selenide and ATP. The protein is Selenide, water dikinase of Paraburkholderia xenovorans (strain LB400).